A 144-amino-acid chain; its full sequence is Large ribosomal subunit protein uL15 (144 aa).

The disordered stretch occupies residues 1–56 (MELNNLKPAAGAKHAKRRVGRGIGSGLGKTAGRGHKGQKSRSGGFHKVGFEGGQMP). Gly residues predominate over residues 21–31 (RGIGSGLGKTA).

The protein belongs to the universal ribosomal protein uL15 family. In terms of assembly, part of the 50S ribosomal subunit.

In terms of biological role, binds to the 23S rRNA. The protein is Large ribosomal subunit protein uL15 of Burkholderia cenocepacia (strain HI2424).